Consider the following 167-residue polypeptide: Phosphopantetheine adenylyltransferase (167 aa).

T10 is a binding site for substrate. ATP contacts are provided by residues 10–11 (TF) and H18. Substrate is bound by residues A77 and R91. ATP contacts are provided by residues 92-94 (GLR), E102, and 127-133 (YSFISSS).

It belongs to the bacterial CoaD family. As to quaternary structure, homohexamer. It depends on Mg(2+) as a cofactor.

It localises to the cytoplasm. The catalysed reaction is (R)-4'-phosphopantetheine + ATP + H(+) = 3'-dephospho-CoA + diphosphate. Its pathway is cofactor biosynthesis; coenzyme A biosynthesis; CoA from (R)-pantothenate: step 4/5. In terms of biological role, reversibly transfers an adenylyl group from ATP to 4'-phosphopantetheine, yielding dephospho-CoA (dPCoA) and pyrophosphate. This Thermomicrobium roseum (strain ATCC 27502 / DSM 5159 / P-2) protein is Phosphopantetheine adenylyltransferase.